The sequence spans 379 residues: Peritrophin-48 (379 aa).

The N-terminal stretch at 1 to 20 (MKAKTLTATLALILLAFAQA) is a signal peptide. Chitin-binding type-2 domains are found at residues 25 to 83 (ASYC…NCFF) and 86 to 143 (ANPC…NTGN). 2 disulfides stabilise this stretch: cysteine 60–cysteine 73 and cysteine 120–cysteine 133. Residues asparagine 150 and asparagine 168 are each glycosylated (N-linked (GlcNAc...) asparagine). 3 Chitin-binding type-2 domains span residues 151-208 (LSVC…ACSR), 224-283 (TSPC…RTLK), and 285-356 (CNRC…ACEN). Residues cysteine 185 and cysteine 198 are joined by a disulfide bond. 2 N-linked (GlcNAc...) asparagine glycosylation sites follow: asparagine 247 and asparagine 252. Cysteine 324 and cysteine 337 are oxidised to a cystine. 3 N-linked (GlcNAc...) asparagine glycosylation sites follow: asparagine 341, asparagine 356, and asparagine 373.

In terms of processing, glycosylated. Larval peritrophic membrane.

Its function is as follows. Binds chitin and may bind related oligosaccharide structures. This Chrysomya bezziana (Old world screw-worm fly) protein is Peritrophin-48.